The primary structure comprises 247 residues: Capsid protein (247 aa).

A Bipartite nuclear localization signal motif is present at residues 3–20; the sequence is KRDAPWRLMAGTSKVSRS. Positions 31–45 match the Nuclear localization signal motif; that stretch reads KRDAWVNRPMYRKPR. The Nuclear export signal signature appears at 92–113; sequence ITHRVGKRFCVKSVYILGKIWM. A Bipartite nuclear localization signal motif is present at residues 191–238; that stretch reads RRFWKVNNNVVYNHQEAGKYENHTENALLLYMACTHASNPVYATLKIR.

It belongs to the geminiviridae capsid protein family. As to quaternary structure, homomultimer. Binds to single-stranded and double-stranded viral DNA. Interacts (via nuclear localization signals) with host importin alpha-1a.

It localises to the virion. The protein resides in the host nucleus. In terms of biological role, encapsidates the viral DNA into characteristic twinned ('geminate') particles. Binds the genomic viral ssDNA and shuttles it into and out of the cell nucleus. The CP of bipartite geminiviruses is not required for cell-to-cell or systemic movement. The chain is Capsid protein from Solanum lycopersicum (Tomato).